The primary structure comprises 593 residues: Early nodule-specific protein 2 (593 aa).

Pro residues predominate over residues 71–110; it reads EKPPIYEPPPTEEPPPVYKPPIIHPPPNYKPPAHTPPIYH. Positions 71–593 are disordered; it reads EKPPIYEPPP…GHYPPYKKNQ (523 aa). Basic and acidic residues-rich tracts occupy residues 123–138 and 166–195; these read PYEKPPHEEPPREYQP and PPYEKPPPEYQPPHHEKPPPEYQPPHEKPP. Over residues 196–210 the composition is skewed to pro residues; sequence PEYTPPYEKPPPEYQ. 2 stretches are compositionally biased toward basic and acidic residues: residues 227-265 and 275-292; these read PPHEKPPHEHPPPEYQPPHEKPPHEHPPPEYQPPHEKPP and PPHEHPPPEYQPPHEKPP. Positions 294–306 are enriched in pro residues; it reads VHPPPEYQPPYLK. Composition is skewed to basic and acidic residues over residues 339–350, 360–372, 382–394, and 404–421; these read PPHEKPPHEHPP, PPPEHQPPHENPP, PPHEKPPHYEHPP, and PPPEYKPPHEKPPHEHPP. A compositionally biased stretch (pro residues) spans 422 to 435; the sequence is PEYQPPQENPPPEY. Basic and acidic residues predominate over residues 506 to 522; the sequence is PRHEKPMPKYQPPHEKL. The span at 532–558 shows a compositional bias: pro residues; it reads KTPPPQAYHPPPPIYHHPPFHPPPHVK.

It belongs to the nodulin 75 family.

Involved in early stages of root nodule development. The protein is Early nodule-specific protein 2 of Medicago truncatula (Barrel medic).